The sequence spans 126 residues: Gene 82 protein (126 aa).

This is Gene 82 protein (82) from Mycobacterium phage L5 (Mycobacteriophage L5).